The chain runs to 300 residues: Transmembrane protein 158 (300 aa).

Positions 1–20 are cleaved as a signal peptide; the sequence is MLPLLAALLAAACPLPPVRG. Asn-75 is a glycosylation site (N-linked (GlcNAc...) asparagine). A run of 2 helical transmembrane segments spans residues 231 to 251 and 273 to 293; these read LVIV…IAGF and VPAG…AAAV.

It belongs to the TMEM158 family. N-glycosylated.

The protein resides in the membrane. Its function is as follows. Receptor for brain injury-derived neurotrophic peptide (BINP), a synthetic 13-mer peptide. In Homo sapiens (Human), this protein is Transmembrane protein 158 (TMEM158).